A 476-amino-acid polypeptide reads, in one-letter code: NADH-quinone oxidoreductase subunit N (476 aa).

A run of 13 helical transmembrane segments spans residues 7-27, 33-53, 59-79, 100-120, 122-142, 156-176, 199-219, 237-257, 265-285, 305-325, 363-383, 399-419, and 437-457; these read LTVE…GLLV, RGIA…AFGM, VVLG…LFLV, GEYY…ASSG, LVSL…LAAF, YVLL…LVYG, LLLG…AVPF, FLSV…FFGA, WVQL…LVAI, LLLG…YYAM, VAAL…MAGF, IWLA…YLLV, and VAPG…ILGI.

The protein belongs to the complex I subunit 2 family. As to quaternary structure, NDH-1 is composed of 14 different subunits. Subunits NuoA, H, J, K, L, M, N constitute the membrane sector of the complex.

It localises to the cell membrane. The catalysed reaction is a quinone + NADH + 5 H(+)(in) = a quinol + NAD(+) + 4 H(+)(out). In terms of biological role, NDH-1 shuttles electrons from NADH, via FMN and iron-sulfur (Fe-S) centers, to quinones in the respiratory chain. The immediate electron acceptor for the enzyme in this species is believed to be a menaquinone. Couples the redox reaction to proton translocation (for every two electrons transferred, four hydrogen ions are translocated across the cytoplasmic membrane), and thus conserves the redox energy in a proton gradient. The sequence is that of NADH-quinone oxidoreductase subunit N from Moorella thermoacetica (strain ATCC 39073 / JCM 9320).